A 355-amino-acid polypeptide reads, in one-letter code: Protein ECERIFERUM 16 (355 aa).

Disordered stretches follow at residues 1 to 60 (MDSK…LPSN) and 296 to 315 (HSSTEQFNKPGNPSDQKIHM). Residues 7–28 (AKSKRAHTLHHSKKSHSVHKPK) show a composition bias toward basic residues. Composition is skewed to polar residues over residues 41–53 (QGNQTKSPVQSRR) and 296–310 (HSSTEQFNKPGNPSD).

Interacts with RST1. In terms of tissue distribution, expressed in taproots, lateral roots, root tips, leaf veins, cauline leaves, inflorescences, flowers, and siliques.

The protein localises to the cytoplasm. It is found in the cytosol. The protein resides in the endoplasmic reticulum. In terms of biological role, together with RST1, acts as a cofactor of the cytoplasmic exosome and connects the cytosolic RNA exosome to the SKI complex. Acts as a post-transcriptional gene silencing (PTGS) suppressor. CER16/RIPR can, like RST1 suppress the production of small interfering RNAs (siRNAs) from the CER3 locus, which is involved in cuticule membrane and wax production, and in the typhine and sporopollenin biosynthesis of pollen. The polypeptide is Protein ECERIFERUM 16 (Arabidopsis thaliana (Mouse-ear cress)).